Consider the following 257-residue polypeptide: UPF0246 protein SO_3540 (257 aa).

It belongs to the UPF0246 family.

The sequence is that of UPF0246 protein SO_3540 from Shewanella oneidensis (strain ATCC 700550 / JCM 31522 / CIP 106686 / LMG 19005 / NCIMB 14063 / MR-1).